The chain runs to 146 residues: Ribosome-binding factor A (146 aa).

The span at 122-134 (QQQFGSAEDVTSN) shows a compositional bias: polar residues. Positions 122 to 146 (QQQFGSAEDVTSNDIDEADDTEGKA) are disordered. Over residues 135–146 (DIDEADDTEGKA) the composition is skewed to acidic residues.

The protein belongs to the RbfA family. Monomer. Binds 30S ribosomal subunits, but not 50S ribosomal subunits or 70S ribosomes.

The protein resides in the cytoplasm. In terms of biological role, one of several proteins that assist in the late maturation steps of the functional core of the 30S ribosomal subunit. Associates with free 30S ribosomal subunits (but not with 30S subunits that are part of 70S ribosomes or polysomes). Required for efficient processing of 16S rRNA. May interact with the 5'-terminal helix region of 16S rRNA. The protein is Ribosome-binding factor A of Shewanella sp. (strain ANA-3).